The sequence spans 149 residues: Endoribonuclease YbeY (149 aa).

Zn(2+)-binding residues include His101, His105, and His111.

It belongs to the endoribonuclease YbeY family. Requires Zn(2+) as cofactor.

It localises to the cytoplasm. In terms of biological role, single strand-specific metallo-endoribonuclease involved in late-stage 70S ribosome quality control and in maturation of the 3' terminus of the 16S rRNA. The protein is Endoribonuclease YbeY of Thermotoga neapolitana (strain ATCC 49049 / DSM 4359 / NBRC 107923 / NS-E).